Reading from the N-terminus, the 260-residue chain is UPF0246 protein BamMC406_2140 (260 aa).

Belongs to the UPF0246 family.

The sequence is that of UPF0246 protein BamMC406_2140 from Burkholderia ambifaria (strain MC40-6).